Reading from the N-terminus, the 333-residue chain is Ketol-acid reductoisomerase (NADP(+)) (333 aa).

In terms of domain architecture, KARI N-terminal Rossmann spans 2–182 (AKLYYEKDCN…GGARAGVLKT (181 aa)). NADP(+)-binding positions include 25 to 28 (YGSQ), S51, S53, and 83 to 86 (DEKQ). The active site involves H108. G134 contributes to the NADP(+) binding site. The region spanning 183-328 (TFKEETETDL…KELRDMMSWS (146 aa)) is the KARI C-terminal knotted domain. Positions 191, 195, 227, and 231 each coordinate Mg(2+). S252 lines the substrate pocket.

It belongs to the ketol-acid reductoisomerase family. Mg(2+) is required as a cofactor.

The catalysed reaction is (2R)-2,3-dihydroxy-3-methylbutanoate + NADP(+) = (2S)-2-acetolactate + NADPH + H(+). It catalyses the reaction (2R,3R)-2,3-dihydroxy-3-methylpentanoate + NADP(+) = (S)-2-ethyl-2-hydroxy-3-oxobutanoate + NADPH + H(+). Its pathway is amino-acid biosynthesis; L-isoleucine biosynthesis; L-isoleucine from 2-oxobutanoate: step 2/4. It functions in the pathway amino-acid biosynthesis; L-valine biosynthesis; L-valine from pyruvate: step 2/4. Its function is as follows. Involved in the biosynthesis of branched-chain amino acids (BCAA). Catalyzes an alkyl-migration followed by a ketol-acid reduction of (S)-2-acetolactate (S2AL) to yield (R)-2,3-dihydroxy-isovalerate. In the isomerase reaction, S2AL is rearranged via a Mg-dependent methyl migration to produce 3-hydroxy-3-methyl-2-ketobutyrate (HMKB). In the reductase reaction, this 2-ketoacid undergoes a metal-dependent reduction by NADPH to yield (R)-2,3-dihydroxy-isovalerate. The polypeptide is Ketol-acid reductoisomerase (NADP(+)) (Alkaliphilus metalliredigens (strain QYMF)).